The following is a 375-amino-acid chain: MESILSCPIVSVNARVWRFWSFVLKHDAMRYISIIPVTVMTFFMFLDLGHSWGDFQDVIIKGYFAVLYFNAVLRTLILVKDRKLYENFMEGISKFYFEISRIDDHQIQSLLRSYTTRARMLSISNLALGAIISTCFTVYPMFTGVRGLPYGMFIPGVDGYQSPQYEIIYLVQVVLTFPGCCMYIPFTSFFVSTTLFGLVQIKTLQRQLQTFKDGIGSHENKNADLQVIKLIQDHKRIIAYVSELNSLVTYICFVEFLSFGLMLCALLFLLNVIENHAQIVIVAAYIFMIISQIFAFYWHANEVREESMNIAVAAYSGPWVELDDSIKKKLLLIILRAQQPLEITVGNVYPMTLEMFQSLLNASYSYFTLLRRVYN.

The next 6 helical transmembrane spans lie at 32-52 (ISII…GHSW), 58-78 (VIIK…TLIL), 125-145 (NLAL…FTGV), 167-187 (IIYL…IPFT), 250-270 (YICF…LFLL), and 279-299 (IVIV…FYWH).

It belongs to the insect chemoreceptor superfamily. Heteromeric odorant receptor channel (TC 1.A.69) family. As to expression, expressed in female antenna, maxillary palp and proboscis. Expressed in female body. Expressed in male tissues.

Its subcellular location is the cell membrane. Functionally, odorant receptor which complexes with Orco, a coreceptor, to form odorant-sensing units, providing sensitive and prolonged odorant signaling and calcium permeability. Can sense indole, 1-octen-3-ol, 3-methyindole and an insect repellent DEET. This chain is Odorant receptor 10, found in Aedes albopictus (Asian tiger mosquito).